The primary structure comprises 174 residues: Adipose-secreted signaling protein (174 aa).

At Ala-2 the chain carries N-acetylalanine. A Phosphothreonine modification is found at Thr-147.

It belongs to the ADISSP family.

It is found in the secreted. Adipocyte-secreted protein (adipokine) that acts as a key regulator for white adipose tissue (WAT) thermogenesis and glucose homeostasis at least in part through activation of protein kinase A (PKA). The protein is Adipose-secreted signaling protein of Homo sapiens (Human).